The chain runs to 431 residues: Serine hydroxymethyltransferase 2 (431 aa).

Residues L131 and 135–137 (GHL) contribute to the (6S)-5,6,7,8-tetrahydrofolate site. At K240 the chain carries N6-(pyridoxal phosphate)lysine.

This sequence belongs to the SHMT family. In terms of assembly, homodimer. It depends on pyridoxal 5'-phosphate as a cofactor.

It is found in the cytoplasm. It carries out the reaction (6R)-5,10-methylene-5,6,7,8-tetrahydrofolate + glycine + H2O = (6S)-5,6,7,8-tetrahydrofolate + L-serine. It functions in the pathway one-carbon metabolism; tetrahydrofolate interconversion. Its pathway is amino-acid biosynthesis; glycine biosynthesis; glycine from L-serine: step 1/1. Catalyzes the reversible interconversion of serine and glycine with tetrahydrofolate (THF) serving as the one-carbon carrier. This reaction serves as the major source of one-carbon groups required for the biosynthesis of purines, thymidylate, methionine, and other important biomolecules. Also exhibits THF-independent aldolase activity toward beta-hydroxyamino acids, producing glycine and aldehydes, via a retro-aldol mechanism. The polypeptide is Serine hydroxymethyltransferase 2 (Photobacterium profundum (strain SS9)).